The primary structure comprises 968 residues: uncharacterized protein (968 aa).

The helical transmembrane segment at Leu-12 to Phe-32 threads the bilayer.

It to E.coli YtfN.

The protein resides in the membrane. This is an uncharacterized protein from Buchnera aphidicola subsp. Schizaphis graminum (strain Sg).